Here is an 873-residue protein sequence, read N- to C-terminus: Bifunctional heparan sulfate N-deacetylase/N-sulfotransferase 3 (873 aa).

Over M1–R13 the chain is Cytoplasmic. Residues T14 to Y34 traverse the membrane as a helical; Signal-anchor for type II membrane protein segment. The Lumenal portion of the chain corresponds to S35 to R873. The tract at residues G36 to E589 is heparan sulfate N-deacetylase 3. N-linked (GlcNAc...) asparagine glycans are attached at residues N146, N226, N342, and N392. The segment at K590–R873 is heparan sulfate N-sulfotransferase 3. K605 acts as the For sulfotransferase activity in catalysis. K605 to T609 is a binding site for 3'-phosphoadenylyl sulfate. Residue N658 is glycosylated (N-linked (GlcNAc...) asparagine). Residue S703 coordinates 3'-phosphoadenylyl sulfate. An N-linked (GlcNAc...) asparagine glycan is attached at N794. The cysteines at positions 809 and 819 are disulfide-linked. K824–Y828 contributes to the 3'-phosphoadenylyl sulfate binding site.

This sequence belongs to the sulfotransferase 1 family. NDST subfamily. In terms of assembly, monomer. In terms of tissue distribution, strongly expressed strongly in brain. Expressed at high level at embryonic day 11 compared to other stages of development. Weakly expressed in adult heart, kidney, muscle, endothelial cells and testis but not in other tissues.

It localises to the golgi apparatus membrane. It catalyses the reaction alpha-D-glucosaminyl-[heparan sulfate](n) + 3'-phosphoadenylyl sulfate = N-sulfo-alpha-D-glucosaminyl-[heparan sulfate](n) + adenosine 3',5'-bisphosphate + 2 H(+). The protein operates within glycan metabolism; heparan sulfate biosynthesis. It participates in glycan metabolism; heparin biosynthesis. Its function is as follows. Essential bifunctional enzyme that catalyzes both the N-deacetylation and the N-sulfation of glucosamine (GlcNAc) of the glycosaminoglycan in heparan sulfate. Modifies the GlcNAc-GlcA disaccharide repeating sugar backbone to make N-sulfated heparosan, a prerequisite substrate for later modifications in heparin biosynthesis. Has high deacetylase activity but low sulfotransferase activity. This Mus musculus (Mouse) protein is Bifunctional heparan sulfate N-deacetylase/N-sulfotransferase 3 (Ndst3).